The chain runs to 118 residues: Immunoglobulin heavy variable 4-30-2 (118 aa).

The first 19 residues, 1 to 19 (MKHLWFFLLLVAAPRWVLS), serve as a signal peptide directing secretion. The framework-1 stretch occupies residues 20-44 (QLQLQESGSGLVKPSQTLSLTCAVS). In terms of domain architecture, Ig-like spans 20 to 118 (QLQLQESGSG…ADTAVYYCAR (99 aa)). A disulfide bond links C41 and C116. The complementarity-determining-1 stretch occupies residues 45–54 (GGSISSGGYS). The interval 55 to 71 (WSWIRQPPGKGLEWIGY) is framework-2. The complementarity-determining-2 stretch occupies residues 72–78 (IYHSGST). Positions 79–116 (YYNPSLKSRVTISVDRSKNQFSLKLSSVTAADTAVYYC) are framework-3. Residues 117 to 118 (AR) form a complementarity-determining-3 region.

Immunoglobulins are composed of two identical heavy chains and two identical light chains; disulfide-linked.

The protein localises to the secreted. It is found in the cell membrane. V region of the variable domain of immunoglobulin heavy chains that participates in the antigen recognition. Immunoglobulins, also known as antibodies, are membrane-bound or secreted glycoproteins produced by B lymphocytes. In the recognition phase of humoral immunity, the membrane-bound immunoglobulins serve as receptors which, upon binding of a specific antigen, trigger the clonal expansion and differentiation of B lymphocytes into immunoglobulins-secreting plasma cells. Secreted immunoglobulins mediate the effector phase of humoral immunity, which results in the elimination of bound antigens. The antigen binding site is formed by the variable domain of one heavy chain, together with that of its associated light chain. Thus, each immunoglobulin has two antigen binding sites with remarkable affinity for a particular antigen. The variable domains are assembled by a process called V-(D)-J rearrangement and can then be subjected to somatic hypermutations which, after exposure to antigen and selection, allow affinity maturation for a particular antigen. This is Immunoglobulin heavy variable 4-30-2 from Homo sapiens (Human).